The primary structure comprises 140 residues: Profilin-2 (140 aa).

Position 2 is an N-acetylalanine (A2).

The protein belongs to the profilin family. Occurs in many kinds of cells as a complex with monomeric actin in a 1:1 ratio. Interacts with PFN2. Interacts with ACTMAP (via N-terminus); the interaction may facilitate efficient cleavage of the acetylated N-terminus of immature actin by ACTMAP.

The protein resides in the cytoplasm. The protein localises to the cytoskeleton. Functionally, binds to actin and affects the structure of the cytoskeleton. At high concentrations, profilin prevents the polymerization of actin, whereas it enhances it at low concentrations. By binding to PIP2, it inhibits the formation of IP3 and DG. In Bos taurus (Bovine), this protein is Profilin-2 (PFN2).